The primary structure comprises 369 residues: Maltose/maltodextrin import ATP-binding protein MalK (369 aa).

The ABC transporter domain occupies 4–234 (VTLRNVCKAY…PQNRFVAGFI (231 aa)). 36-43 (GPSGCGKS) serves as a coordination point for ATP.

This sequence belongs to the ABC transporter superfamily. Maltooligosaccharide importer (TC 3.A.1.1.1) family. In terms of assembly, the complex is composed of two ATP-binding proteins (MalK), two transmembrane proteins (MalG and MalK) and a solute-binding protein (MalE).

The protein localises to the cell inner membrane. The catalysed reaction is D-maltose(out) + ATP + H2O = D-maltose(in) + ADP + phosphate + H(+). Functionally, part of the ABC transporter complex MalEFGK involved in maltose/maltodextrin import. Responsible for energy coupling to the transport system. The protein is Maltose/maltodextrin import ATP-binding protein MalK of Photobacterium profundum (strain SS9).